Consider the following 28-residue polypeptide: leu operon leader peptide (28 aa).

Involved in control of the biosynthesis of leucine. The sequence is that of leu operon leader peptide (leuL) from Shigella flexneri.